Consider the following 434-residue polypeptide: Histidinol dehydrogenase (434 aa).

3 residues coordinate NAD(+): Tyr-130, Gln-188, and Asn-211. 3 residues coordinate substrate: Ser-237, Gln-259, and His-262. Zn(2+)-binding residues include Gln-259 and His-262. Active-site proton acceptor residues include Glu-326 and His-327. Substrate-binding residues include His-327, Asp-360, Glu-414, and His-419. Position 360 (Asp-360) interacts with Zn(2+). His-419 provides a ligand contact to Zn(2+).

The protein belongs to the histidinol dehydrogenase family. Homodimer. The cofactor is Zn(2+).

The catalysed reaction is L-histidinol + 2 NAD(+) + H2O = L-histidine + 2 NADH + 3 H(+). Its pathway is amino-acid biosynthesis; L-histidine biosynthesis; L-histidine from 5-phospho-alpha-D-ribose 1-diphosphate: step 9/9. Functionally, catalyzes the sequential NAD-dependent oxidations of L-histidinol to L-histidinaldehyde and then to L-histidine. The chain is Histidinol dehydrogenase from Shigella sonnei (strain Ss046).